The sequence spans 511 residues: Exodeoxyribonuclease 7 large subunit (511 aa).

It belongs to the XseA family. Heterooligomer composed of large and small subunits.

It localises to the cytoplasm. The enzyme catalyses Exonucleolytic cleavage in either 5'- to 3'- or 3'- to 5'-direction to yield nucleoside 5'-phosphates.. Bidirectionally degrades single-stranded DNA into large acid-insoluble oligonucleotides, which are then degraded further into small acid-soluble oligonucleotides. The sequence is that of Exodeoxyribonuclease 7 large subunit from Brucella suis (strain ATCC 23445 / NCTC 10510).